The chain runs to 469 residues: Probable Xaa-Pro aminopeptidase PEPP (469 aa).

Mn(2+) contacts are provided by Asp264, Asp275, Glu398, and Glu438.

It belongs to the peptidase M24B family. Requires Mn(2+) as cofactor.

It catalyses the reaction Release of any N-terminal amino acid, including proline, that is linked to proline, even from a dipeptide or tripeptide.. In terms of biological role, catalyzes the removal of a penultimate prolyl residue from the N-termini of peptides. This Ajellomyces capsulatus (strain H143) (Darling's disease fungus) protein is Probable Xaa-Pro aminopeptidase PEPP (PEPP).